The following is a 303-amino-acid chain: Probable alpha-L-glutamate ligase (303 aa).

Positions 104–287 constitute an ATP-grasp domain; that stretch reads LQLLAREGID…IAGMMIEFIE (184 aa). Residues K141, 178–179, D187, and 211–213 contribute to the ATP site; these read EY and RSN. Residues D248, E260, and N262 each contribute to the Mg(2+) site. Residues D248, E260, and N262 each contribute to the Mn(2+) site.

This sequence belongs to the RimK family. It depends on Mg(2+) as a cofactor. Requires Mn(2+) as cofactor.

This Pectobacterium carotovorum subsp. carotovorum (strain PC1) protein is Probable alpha-L-glutamate ligase.